A 427-amino-acid chain; its full sequence is Steroid C26-monooxygenase (427 aa).

Cys-360 is a binding site for heme.

Belongs to the cytochrome P450 family. Heme serves as cofactor.

It carries out the reaction cholest-4-en-3-one + 6 reduced [2Fe-2S]-[ferredoxin] + 3 O2 + 5 H(+) = (25S)-3-oxocholest-4-en-26-oate + 6 oxidized [2Fe-2S]-[ferredoxin] + 4 H2O. The protein operates within steroid metabolism; cholesterol degradation. In terms of biological role, involved in the utilization of cholesterol as the sole carbon and energy source by degrading the side chain. Primarily catalyzes the sequential oxidation of the terminal methyl of cholest-4-en-3-one into (25S)-26-hydroxycholest-4-en-3-one (alcohol), (25S)-26-oxocholest-4-en-3-one (aldehyde), to finally yield the carboxylic acid (25S)-3-oxocholest-4-en-26-oate. Also able to sequentially oxidize cholesterol itself, not only cholest-4-en-3-one. This is Steroid C26-monooxygenase from Mycolicibacterium smegmatis (strain ATCC 700084 / mc(2)155) (Mycobacterium smegmatis).